Here is a 275-residue protein sequence, read N- to C-terminus: Formamidopyrimidine-DNA glycosylase (275 aa).

Proline 2 (schiff-base intermediate with DNA) is an active-site residue. The active-site Proton donor is glutamate 3. The active-site Proton donor; for beta-elimination activity is the lysine 58. DNA is bound by residues histidine 91 and arginine 110. The FPG-type zinc finger occupies 238–272 (QVYGQTGKPCPRCGQAIVKLKVGGRGTHICPKCQK). The active-site Proton donor; for delta-elimination activity is the arginine 262.

The protein belongs to the FPG family. Monomer. Zn(2+) is required as a cofactor.

The catalysed reaction is Hydrolysis of DNA containing ring-opened 7-methylguanine residues, releasing 2,6-diamino-4-hydroxy-5-(N-methyl)formamidopyrimidine.. The enzyme catalyses 2'-deoxyribonucleotide-(2'-deoxyribose 5'-phosphate)-2'-deoxyribonucleotide-DNA = a 3'-end 2'-deoxyribonucleotide-(2,3-dehydro-2,3-deoxyribose 5'-phosphate)-DNA + a 5'-end 5'-phospho-2'-deoxyribonucleoside-DNA + H(+). Involved in base excision repair of DNA damaged by oxidation or by mutagenic agents. Acts as a DNA glycosylase that recognizes and removes damaged bases. Has a preference for oxidized purines, such as 7,8-dihydro-8-oxoguanine (8-oxoG). Has AP (apurinic/apyrimidinic) lyase activity and introduces nicks in the DNA strand. Cleaves the DNA backbone by beta-delta elimination to generate a single-strand break at the site of the removed base with both 3'- and 5'-phosphates. This is Formamidopyrimidine-DNA glycosylase from Streptococcus pyogenes serotype M18 (strain MGAS8232).